The sequence spans 590 residues: Glutamine--tRNA ligase (590 aa).

The 'HIGH' region signature appears at 55–65; that stretch reads PEPNGYLHIGH. Residues 56–58 and 62–68 contribute to the ATP site; these read EPN and HIGHAKS. 2 residues coordinate L-glutamine: Asp-93 and Tyr-238. ATP-binding positions include Thr-257 and 292 to 293; that span reads RL. Residues 299–303 carry the 'KMSKS' region motif; it reads ITSKR.

The protein belongs to the class-I aminoacyl-tRNA synthetase family. As to quaternary structure, monomer.

It is found in the cytoplasm. It carries out the reaction tRNA(Gln) + L-glutamine + ATP = L-glutaminyl-tRNA(Gln) + AMP + diphosphate. The protein is Glutamine--tRNA ligase of Polynucleobacter necessarius subsp. necessarius (strain STIR1).